The following is a 526-amino-acid chain: Peptide chain release factor 3 (526 aa).

The tr-type G domain maps to 9–277 (DKRRTFAIIS…GIVEWAPKPL (269 aa)). Residues 18–25 (SHPDAGKT), 86–90 (DTPGH), and 140–143 (NKLD) each bind GTP.

This sequence belongs to the TRAFAC class translation factor GTPase superfamily. Classic translation factor GTPase family. PrfC subfamily.

It localises to the cytoplasm. In terms of biological role, increases the formation of ribosomal termination complexes and stimulates activities of RF-1 and RF-2. It binds guanine nucleotides and has strong preference for UGA stop codons. It may interact directly with the ribosome. The stimulation of RF-1 and RF-2 is significantly reduced by GTP and GDP, but not by GMP. This is Peptide chain release factor 3 from Shewanella sp. (strain MR-4).